Consider the following 271-residue polypeptide: Formamidopyrimidine-DNA glycosylase (271 aa).

Proline 2 (schiff-base intermediate with DNA) is an active-site residue. Catalysis depends on glutamate 3, which acts as the Proton donor. Lysine 57 functions as the Proton donor; for beta-elimination activity in the catalytic mechanism. Histidine 90, arginine 109, and lysine 151 together coordinate DNA. Residues 236 to 270 (HVYGRGGETCTQCGNLLSEIRLGQRTTVFCGICQT) form an FPG-type zinc finger. The active-site Proton donor; for delta-elimination activity is the arginine 260.

This sequence belongs to the FPG family. Monomer. Zn(2+) is required as a cofactor.

It catalyses the reaction Hydrolysis of DNA containing ring-opened 7-methylguanine residues, releasing 2,6-diamino-4-hydroxy-5-(N-methyl)formamidopyrimidine.. The catalysed reaction is 2'-deoxyribonucleotide-(2'-deoxyribose 5'-phosphate)-2'-deoxyribonucleotide-DNA = a 3'-end 2'-deoxyribonucleotide-(2,3-dehydro-2,3-deoxyribose 5'-phosphate)-DNA + a 5'-end 5'-phospho-2'-deoxyribonucleoside-DNA + H(+). Involved in base excision repair of DNA damaged by oxidation or by mutagenic agents. Acts as a DNA glycosylase that recognizes and removes damaged bases. Has a preference for oxidized purines, such as 7,8-dihydro-8-oxoguanine (8-oxoG). Has AP (apurinic/apyrimidinic) lyase activity and introduces nicks in the DNA strand. Cleaves the DNA backbone by beta-delta elimination to generate a single-strand break at the site of the removed base with both 3'- and 5'-phosphates. This Shewanella sp. (strain MR-4) protein is Formamidopyrimidine-DNA glycosylase.